The chain runs to 158 residues: Putative tyrosine-protein phosphatase OCA1 (158 aa).

Positions 7–158 constitute a Tyrosine-protein phosphatase domain; sequence NYGMVEENFY…DEELVFGASY (152 aa). The Phosphocysteine intermediate role is filled by Cys99.

It belongs to the protein-tyrosine phosphatase family.

The protein resides in the cytoplasm. The enzyme catalyses O-phospho-L-tyrosyl-[protein] + H2O = L-tyrosyl-[protein] + phosphate. Putative tyrosine-protein phosphatase required for protection against superoxide stress. This chain is Putative tyrosine-protein phosphatase OCA1 (OCA1), found in Mycosarcoma maydis (Corn smut fungus).